A 196-amino-acid chain; its full sequence is DnaA initiator-associating protein DiaA (196 aa).

In terms of domain architecture, SIS spans 34 to 196 (LVQSLLNGNK…DNTLFPHQDD (163 aa)).

The protein belongs to the SIS family. DiaA subfamily. In terms of assembly, homotetramer; dimer of dimers.

Required for the timely initiation of chromosomal replication via direct interactions with the DnaA initiator protein. This Enterobacter sp. (strain 638) protein is DnaA initiator-associating protein DiaA.